The sequence spans 773 residues: Carnitine O-palmitoyltransferase 1, liver isoform (773 aa).

Position 2 is an N-acetylalanine (Ala-2). The Cytoplasmic portion of the chain corresponds to 2 to 47 (AEAHQAVAFQFTVTPDGIDLRLSHEALKQICLSGLHSWKKKFIRFK). A helical membrane pass occupies residues 48-73 (NGIITGVFPANPSSWLIVVVGVISSM). The Mitochondrial intermembrane segment spans residues 74 to 102 (HAKVDPSLGMIAKISRTLDTTGRMSSQTK). Residues 103-122 (NIVSGVLFGTGLWVAVIMTM) traverse the membrane as a helical segment. Residues 123–773 (RYSLKVLLSY…LFGLTINSKK (651 aa)) lie on the Cytoplasmic side of the membrane. Tyr-282 carries the 3'-nitrotyrosine modification. Residue His-473 is the Proton acceptor of the active site. 555 to 567 (GKGLIKKCRTSPD) contacts CoA. Thr-588 is modified (phosphothreonine). The residue at position 589 (Tyr-589) is a 3'-nitrotyrosine. Tyr-589 and Thr-602 together coordinate (R)-carnitine. Residue Thr-604 is modified to Phosphothreonine. A phosphoserine mark is found at Ser-741 and Ser-747.

It belongs to the carnitine/choline acetyltransferase family. In terms of assembly, homohexamer and homotrimer. Identified in a complex that contains at least CPT1A, ACSL1 and VDAC1. Also identified in complexes with ACSL1 and VDAC2 and VDAC3. Interacts with ZDHHC4. In terms of tissue distribution, liver and kidney.

It is found in the mitochondrion outer membrane. The enzyme catalyses (R)-carnitine + hexadecanoyl-CoA = O-hexadecanoyl-(R)-carnitine + CoA. It catalyses the reaction succinyl-CoA + L-lysyl-[protein] = N(6)-succinyl-L-lysyl-[protein] + CoA + H(+). Its pathway is lipid metabolism; fatty acid beta-oxidation. Its activity is regulated as follows. Inhibited by malonyl-CoA. Its function is as follows. Catalyzes the transfer of the acyl group of long-chain fatty acid-CoA conjugates onto carnitine, an essential step for the mitochondrial uptake of long-chain fatty acids and their subsequent beta-oxidation in the mitochondrion. Also possesses a lysine succinyltransferase activity that can regulate enzymatic activity of substrate proteins such as ENO1 and metabolism independent of its classical carnitine O-palmitoyltransferase activity. Plays an important role in hepatic triglyceride metabolism. Also plays a role in inducible regulatory T-cell (iTreg) differentiation once activated by butyryl-CoA that antagonizes malonyl-CoA-mediated CPT1A repression. Sustains the IFN-I response by recruiting ZDHCC4 to palmitoylate MAVS at the mitochondria leading to MAVS stabilization and activation. The sequence is that of Carnitine O-palmitoyltransferase 1, liver isoform (Cpt1a) from Rattus norvegicus (Rat).